Reading from the N-terminus, the 352-residue chain is Protein SIS1 (352 aa).

The J domain maps to 4-70 (ETKLYDLLGV…REIYDQYGLE (67 aa)). S275 carries the post-translational modification Phosphoserine. Positions 300 to 325 (VQPVQPSQTSTYPGQGMPTPKNPSQR) are disordered. The span at 301-312 (QPVQPSQTSTYP) shows a compositional bias: polar residues.

Interacts with polyadenylate-binding protein PAB1.

It is found in the cytoplasm. It localises to the nucleus. Required for nuclear migration during mitosis. It is required for the normal initiation of translation. Might mediate the dissociation of a specific protein complex of the translation machinery. Essential for viability. The protein is Protein SIS1 (SIS1) of Saccharomyces cerevisiae (strain ATCC 204508 / S288c) (Baker's yeast).